A 469-amino-acid chain; its full sequence is Probable Xaa-Pro aminopeptidase PEPP (469 aa).

The Mn(2+) site is built by Asp-257, Asp-268, Glu-391, and Glu-436.

The protein belongs to the peptidase M24B family. Requires Mn(2+) as cofactor.

It catalyses the reaction Release of any N-terminal amino acid, including proline, that is linked to proline, even from a dipeptide or tripeptide.. Catalyzes the removal of a penultimate prolyl residue from the N-termini of peptides. The polypeptide is Probable Xaa-Pro aminopeptidase PEPP (PEPP) (Fusarium vanettenii (strain ATCC MYA-4622 / CBS 123669 / FGSC 9596 / NRRL 45880 / 77-13-4) (Fusarium solani subsp. pisi)).